A 472-amino-acid chain; its full sequence is DEAD-box ATP-dependent RNA helicase 58, chloroplastic (472 aa).

The transit peptide at 1 to 54 (MASQLLNVPHLAFFPKISYASVFSTLKPSFFHSTSTRRALKSSPSSRIINLQAV) directs the protein to the chloroplast. A Q motif motif is present at residues 76–104 (RQICQGFVPEHILHRMEEIGFVFPTDIQR). The Helicase ATP-binding domain occupies 107 to 286 (LPTLFTGRDC…DCIQQKWTKR (180 aa)). An ATP-binding site is contributed by 120-127 (AQTGSGKT). A DEAD box motif is present at residues 231–234 (DEVD). Residues 314 to 472 (NKHQVLLALL…LMFSCEEMML (159 aa)) form the Helicase C-terminal domain.

The protein belongs to the DEAD box helicase family.

The protein resides in the plastid. It is found in the chloroplast. It carries out the reaction ATP + H2O = ADP + phosphate + H(+). The sequence is that of DEAD-box ATP-dependent RNA helicase 58, chloroplastic (RH58) from Arabidopsis thaliana (Mouse-ear cress).